Here is a 304-residue protein sequence, read N- to C-terminus: GS homeobox 2 (304 aa).

The segment at 116-151 (AQFCPRVNHAHHHHHPPQHHHHHHQPQQPGSAAAAA) is disordered. Basic residues predominate over residues 123-140 (NHAHHHHHPPQHHHHHHQ). Positions 141-151 (PQQPGSAAAAA) are enriched in low complexity. The segment at residues 202–261 (GKRMRTAFTSTQLLELEREFSSNMYLSRLRRIEIATYLNLSEKQVKIWFQNRRVKHKKEG) is a DNA-binding region (homeobox). The segment at 283–304 (RSEDEDSLSPASANDDKEISPL) is disordered.

It belongs to the Antp homeobox family.

It localises to the nucleus. It is found in the cytoplasm. Transcription factor that binds 5'-CNAATTAG-3' DNA sequence and regulates the expression of numerous genes including genes important for brain development. During telencephalic development, causes ventralization of pallial progenitors and, depending on the developmental stage, specifies different neuronal fates. At early stages, necessary and sufficient to correctly specify the ventral lateral ganglionic eminence (LGE) and its major derivatives, the striatal projection neurons. At later stages, may specify LGE progenitors toward dorsal LGE fates, including olfactory bulb interneurons. This chain is GS homeobox 2 (GSX2), found in Homo sapiens (Human).